Here is a 723-residue protein sequence, read N- to C-terminus: Fatty acid oxidation complex subunit alpha (723 aa).

Residues 1-189 (MIYQAETLQV…KIGLLDAVVD (189 aa)) are enoyl-CoA hydratase/isomerase. Aspartate 296 lines the substrate pocket. The 3-hydroxyacyl-CoA dehydrogenase stretch occupies residues 311–723 (NKETQRAAVL…FYGAQQQGSI (413 aa)). NAD(+) is bound by residues methionine 325, aspartate 344, 401–403 (VVE), lysine 408, and serine 430. The active-site For 3-hydroxyacyl-CoA dehydrogenase activity is the histidine 451. Residue asparagine 454 participates in NAD(+) binding. 2 residues coordinate substrate: asparagine 501 and tyrosine 661.

This sequence in the N-terminal section; belongs to the enoyl-CoA hydratase/isomerase family. The protein in the C-terminal section; belongs to the 3-hydroxyacyl-CoA dehydrogenase family. Heterotetramer of two alpha chains (FadB) and two beta chains (FadA).

The enzyme catalyses a (3S)-3-hydroxyacyl-CoA + NAD(+) = a 3-oxoacyl-CoA + NADH + H(+). The catalysed reaction is a (3S)-3-hydroxyacyl-CoA = a (2E)-enoyl-CoA + H2O. It carries out the reaction a 4-saturated-(3S)-3-hydroxyacyl-CoA = a (3E)-enoyl-CoA + H2O. It catalyses the reaction (3S)-3-hydroxybutanoyl-CoA = (3R)-3-hydroxybutanoyl-CoA. The enzyme catalyses a (3Z)-enoyl-CoA = a 4-saturated (2E)-enoyl-CoA. The catalysed reaction is a (3E)-enoyl-CoA = a 4-saturated (2E)-enoyl-CoA. The protein operates within lipid metabolism; fatty acid beta-oxidation. Functionally, involved in the aerobic and anaerobic degradation of long-chain fatty acids via beta-oxidation cycle. Catalyzes the formation of 3-oxoacyl-CoA from enoyl-CoA via L-3-hydroxyacyl-CoA. It can also use D-3-hydroxyacyl-CoA and cis-3-enoyl-CoA as substrate. The polypeptide is Fatty acid oxidation complex subunit alpha (Vibrio vulnificus (strain CMCP6)).